A 189-amino-acid chain; its full sequence is Putative dihydrofolate reductase (189 aa).

A DHFR domain is found at 3-185 (KMNLIVAMDA…LKFEFCKWKV (183 aa)). Residues alanine 9 and 15 to 21 (GIGKNGV) each bind NADP(+). 29–34 (DMQYFA) is a binding site for substrate. Position 53-55 (53-55 (RKC)) interacts with NADP(+). A substrate-binding site is contributed by arginine 69. NADP(+) is bound by residues 75–77 (SRQ) and 115–122 (GGAEIYDL).

It belongs to the dihydrofolate reductase family.

It carries out the reaction (6S)-5,6,7,8-tetrahydrofolate + NADP(+) = 7,8-dihydrofolate + NADPH + H(+). The protein operates within cofactor biosynthesis; tetrahydrofolate biosynthesis; 5,6,7,8-tetrahydrofolate from 7,8-dihydrofolate: step 1/1. Its function is as follows. Key enzyme in folate metabolism. Catalyzes an essential reaction for de novo glycine and purine synthesis, and for DNA precursor synthesis. The chain is Putative dihydrofolate reductase (dhfr-1) from Caenorhabditis elegans.